The sequence spans 285 residues: 3-methyl-2-oxobutanoate hydroxymethyltransferase 1 (285 aa).

Mg(2+) is bound by residues Asp-49 and Asp-88. Residues 49–50 (DS), Asp-88, and Lys-118 each bind 3-methyl-2-oxobutanoate. Glu-120 is a Mg(2+) binding site. The active-site Proton acceptor is the Glu-187.

It belongs to the PanB family. Homodecamer; pentamer of dimers. Mg(2+) serves as cofactor.

The protein resides in the cytoplasm. The enzyme catalyses 3-methyl-2-oxobutanoate + (6R)-5,10-methylene-5,6,7,8-tetrahydrofolate + H2O = 2-dehydropantoate + (6S)-5,6,7,8-tetrahydrofolate. The protein operates within cofactor biosynthesis; (R)-pantothenate biosynthesis; (R)-pantoate from 3-methyl-2-oxobutanoate: step 1/2. Catalyzes the reversible reaction in which hydroxymethyl group from 5,10-methylenetetrahydrofolate is transferred onto alpha-ketoisovalerate to form ketopantoate. The protein is 3-methyl-2-oxobutanoate hydroxymethyltransferase 1 of Burkholderia lata (strain ATCC 17760 / DSM 23089 / LMG 22485 / NCIMB 9086 / R18194 / 383).